A 166-amino-acid polypeptide reads, in one-letter code: Fer3-like protein (166 aa).

A disordered region spans residues 57–88 (FEEGDPEEEECEVDQGDGEEEEEEERGRGVSL). Over residues 60 to 80 (GDPEEEECEVDQGDGEEEEEE) the composition is skewed to acidic residues. One can recognise a bHLH domain in the interval 101–153 (AQRQAANIRERKRMFNLNEAFDQLRRKVPTFAYEKRLSRIETLRLAIVYISFM).

Heterodimer with TCF3/E12. Interacts with the bHLH domain of TCF3/E12.

It localises to the nucleus. In terms of biological role, transcription factor that binds to the E-box and functions as inhibitor of transcription. DNA binding requires dimerization with an E protein. Inhibits transcription activation by ASCL1/MASH1 by sequestering E proteins. This Homo sapiens (Human) protein is Fer3-like protein (FERD3L).